We begin with the raw amino-acid sequence, 328 residues long: Phosphate acyltransferase (328 aa).

This sequence belongs to the PlsX family. In terms of assembly, homodimer. Probably interacts with PlsY.

Its subcellular location is the cytoplasm. The enzyme catalyses a fatty acyl-[ACP] + phosphate = an acyl phosphate + holo-[ACP]. It functions in the pathway lipid metabolism; phospholipid metabolism. Functionally, catalyzes the reversible formation of acyl-phosphate (acyl-PO(4)) from acyl-[acyl-carrier-protein] (acyl-ACP). This enzyme utilizes acyl-ACP as fatty acyl donor, but not acyl-CoA. This is Phosphate acyltransferase from Mycoplasma genitalium (strain ATCC 33530 / DSM 19775 / NCTC 10195 / G37) (Mycoplasmoides genitalium).